The primary structure comprises 224 residues: Biosynthetic peptidoglycan transglycosylase (224 aa).

A helical transmembrane segment spans residues 9–29; it reads VLILVSFVLLIQLWIFCSLAW.

This sequence belongs to the glycosyltransferase 51 family.

Its subcellular location is the cell inner membrane. The enzyme catalyses [GlcNAc-(1-&gt;4)-Mur2Ac(oyl-L-Ala-gamma-D-Glu-L-Lys-D-Ala-D-Ala)](n)-di-trans,octa-cis-undecaprenyl diphosphate + beta-D-GlcNAc-(1-&gt;4)-Mur2Ac(oyl-L-Ala-gamma-D-Glu-L-Lys-D-Ala-D-Ala)-di-trans,octa-cis-undecaprenyl diphosphate = [GlcNAc-(1-&gt;4)-Mur2Ac(oyl-L-Ala-gamma-D-Glu-L-Lys-D-Ala-D-Ala)](n+1)-di-trans,octa-cis-undecaprenyl diphosphate + di-trans,octa-cis-undecaprenyl diphosphate + H(+). Its pathway is cell wall biogenesis; peptidoglycan biosynthesis. Its function is as follows. Peptidoglycan polymerase that catalyzes glycan chain elongation from lipid-linked precursors. In Acinetobacter baylyi (strain ATCC 33305 / BD413 / ADP1), this protein is Biosynthetic peptidoglycan transglycosylase.